Reading from the N-terminus, the 636-residue chain is MDIIKKIKKSKSLWAILPSLNATDIEEALSVSSEYYHNTGTSLISDQEYDILMDRLKELNPSSKIFAQVGAPVKGKKVKLPFWMGSMNKIKADEKAVNKWLNEYSGPYVISDKLDGISCLLTIKNNKTKLYTRGDGTYGQDITHLLGLINIDIGLLEEIDQDIAIRGELIMSKKNFEKYQEIMANARNMVGGIVNSKPESVNKDHAADVDLIFYEVIKPNDKLSRQLKILKEWGLKVVYYNIYKTFDVNILESVLSERKKKSGYEIDGIIVTDNNKHVRNISGNPSYSFAFKGDTPTIDTVVKRVIWTPSKDGVLVPRIKFKKVRLSNVDLEYTTGFNAKYIVDNKIGSGAIINVVRSGDVIPYITHVVKPAKKPDLPNIEYVWDKNGVNIILADINDNETVIIKRLTKFMRNIGAENISEGITTRLVEAGFDTIPKIINMTEEDFLTIDGFQERLAEKIYNNLQNSLDNLDILTLMDASNIFGRGFGTKKFKKILDVYPNIVNQYTKETDNIWRKKLLDIEGFDTITVNKFLGEMPNFQKFYKVINKTITIKPYISEVNSEGIFQNQTVVFTGFRNADWQKFIENEGGKVSGSVSKNTSLLVYNDGEESSAKYQKAKQLGIKTMTKSSFSKKFEK.

K113 (N6-AMP-lysine intermediate) is an active-site residue. One can recognise a BRCT domain in the interval N560–K636.

It belongs to the NAD-dependent DNA ligase family.

The catalysed reaction is NAD(+) + (deoxyribonucleotide)n-3'-hydroxyl + 5'-phospho-(deoxyribonucleotide)m = (deoxyribonucleotide)n+m + AMP + beta-nicotinamide D-nucleotide.. Its function is as follows. Catalyzes the formation of phosphodiester linkages between 5'-phosphoryl and 3'-hydroxyl groups in double-stranded DNA using NAD as a coenzyme and as the energy source for the reaction. This is DNA ligase from Acanthamoeba polyphaga (Amoeba).